Reading from the N-terminus, the 642-residue chain is Threonine--tRNA ligase (642 aa).

The region spanning 1-61 (MPVITLPDGS…ENDAQLSIIT (61 aa)) is the TGS domain. The catalytic stretch occupies residues 243–534 (DHRKIGKQLD…LTEEFAGFFP (292 aa)). Position 286 is an N6-acetyllysine (K286). C334, H385, and H511 together coordinate Zn(2+).

Belongs to the class-II aminoacyl-tRNA synthetase family. In terms of assembly, homodimer. Zn(2+) serves as cofactor.

The protein resides in the cytoplasm. It catalyses the reaction tRNA(Thr) + L-threonine + ATP = L-threonyl-tRNA(Thr) + AMP + diphosphate + H(+). In terms of biological role, catalyzes the attachment of threonine to tRNA(Thr) in a two-step reaction: L-threonine is first activated by ATP to form Thr-AMP and then transferred to the acceptor end of tRNA(Thr). Also edits incorrectly charged L-seryl-tRNA(Thr). The sequence is that of Threonine--tRNA ligase from Escherichia coli O9:H4 (strain HS).